The following is a 528-amino-acid chain: Peptide chain release factor 3 (528 aa).

A tr-type G domain is found at 11 to 279 (NKRRTFAIIS…GIVEWAPKPL (269 aa)). GTP-binding positions include 20–27 (SHPDAGKT), 88–92 (DTPGH), and 142–145 (NKLD).

The protein belongs to the TRAFAC class translation factor GTPase superfamily. Classic translation factor GTPase family. PrfC subfamily.

Its subcellular location is the cytoplasm. In terms of biological role, increases the formation of ribosomal termination complexes and stimulates activities of RF-1 and RF-2. It binds guanine nucleotides and has strong preference for UGA stop codons. It may interact directly with the ribosome. The stimulation of RF-1 and RF-2 is significantly reduced by GTP and GDP, but not by GMP. This Shewanella sp. (strain W3-18-1) protein is Peptide chain release factor 3.